The primary structure comprises 221 residues: ATP phosphoribosyltransferase (221 aa).

Belongs to the ATP phosphoribosyltransferase family. Short subfamily. In terms of assembly, heteromultimer composed of HisG and HisZ subunits.

It is found in the cytoplasm. The enzyme catalyses 1-(5-phospho-beta-D-ribosyl)-ATP + diphosphate = 5-phospho-alpha-D-ribose 1-diphosphate + ATP. The protein operates within amino-acid biosynthesis; L-histidine biosynthesis; L-histidine from 5-phospho-alpha-D-ribose 1-diphosphate: step 1/9. Functionally, catalyzes the condensation of ATP and 5-phosphoribose 1-diphosphate to form N'-(5'-phosphoribosyl)-ATP (PR-ATP). Has a crucial role in the pathway because the rate of histidine biosynthesis seems to be controlled primarily by regulation of HisG enzymatic activity. The chain is ATP phosphoribosyltransferase from Anaeromyxobacter dehalogenans (strain 2CP-1 / ATCC BAA-258).